A 325-amino-acid chain; its full sequence is Tetraacyldisaccharide 4'-kinase (325 aa).

55 to 62 (TAGGNGKT) serves as a coordination point for ATP.

This sequence belongs to the LpxK family.

The catalysed reaction is a lipid A disaccharide + ATP = a lipid IVA + ADP + H(+). It participates in glycolipid biosynthesis; lipid IV(A) biosynthesis; lipid IV(A) from (3R)-3-hydroxytetradecanoyl-[acyl-carrier-protein] and UDP-N-acetyl-alpha-D-glucosamine: step 6/6. In terms of biological role, transfers the gamma-phosphate of ATP to the 4'-position of a tetraacyldisaccharide 1-phosphate intermediate (termed DS-1-P) to form tetraacyldisaccharide 1,4'-bis-phosphate (lipid IVA). In Salmonella arizonae (strain ATCC BAA-731 / CDC346-86 / RSK2980), this protein is Tetraacyldisaccharide 4'-kinase.